A 182-amino-acid chain; its full sequence is uncharacterized protein (182 aa).

Belongs to the DNA 3' phosphatase family.

This is an uncharacterized protein from Autographa californica nuclear polyhedrosis virus (AcMNPV).